Reading from the N-terminus, the 132-residue chain is Large-conductance mechanosensitive channel (132 aa).

3 helical membrane passes run 14–34 (VLDM…VDSL), 39–59 (INPI…AVTI), and 68–88 (IGNF…VFLI).

It belongs to the MscL family. As to quaternary structure, homopentamer.

The protein resides in the cell membrane. Its function is as follows. Channel that opens in response to stretch forces in the membrane lipid bilayer. May participate in the regulation of osmotic pressure changes within the cell. This chain is Large-conductance mechanosensitive channel, found in Latilactobacillus sakei subsp. sakei (strain 23K) (Lactobacillus sakei subsp. sakei).